The chain runs to 356 residues: 4-hydroxy-3-methylbut-2-en-1-yl diphosphate synthase (flavodoxin) (356 aa).

Residues Cys264, Cys267, Cys299, and Glu306 each coordinate [4Fe-4S] cluster.

Belongs to the IspG family. Requires [4Fe-4S] cluster as cofactor.

It catalyses the reaction (2E)-4-hydroxy-3-methylbut-2-enyl diphosphate + oxidized [flavodoxin] + H2O + 2 H(+) = 2-C-methyl-D-erythritol 2,4-cyclic diphosphate + reduced [flavodoxin]. The protein operates within isoprenoid biosynthesis; isopentenyl diphosphate biosynthesis via DXP pathway; isopentenyl diphosphate from 1-deoxy-D-xylulose 5-phosphate: step 5/6. In terms of biological role, converts 2C-methyl-D-erythritol 2,4-cyclodiphosphate (ME-2,4cPP) into 1-hydroxy-2-methyl-2-(E)-butenyl 4-diphosphate. This chain is 4-hydroxy-3-methylbut-2-en-1-yl diphosphate synthase (flavodoxin), found in Campylobacter lari (strain RM2100 / D67 / ATCC BAA-1060).